A 93-amino-acid polypeptide reads, in one-letter code: Small ribosomal subunit protein uS19c (93 aa).

The protein belongs to the universal ribosomal protein uS19 family.

It is found in the plastid. Its subcellular location is the chloroplast. Protein S19 forms a complex with S13 that binds strongly to the 16S ribosomal RNA. This Zea mays (Maize) protein is Small ribosomal subunit protein uS19c (rps19-A).